The primary structure comprises 372 residues: Phospho-N-acetylmuramoyl-pentapeptide-transferase (372 aa).

A run of 10 helical transmembrane segments spans residues 2 to 22, 71 to 91, 98 to 118, 134 to 154, 176 to 196, 211 to 231, 251 to 271, 275 to 295, 300 to 320, and 349 to 369; these read LVWL…VSSL, TPTM…LLWA, VWIL…DDWL, YFWL…IATL, MIPF…YFVI, GLAI…AYVS, VIIV…FNAH, VFMG…IAVM, IAFA…MLQV, and QVVA…LMTL.

It belongs to the glycosyltransferase 4 family. MraY subfamily. It depends on Mg(2+) as a cofactor.

The protein resides in the cell inner membrane. The catalysed reaction is UDP-N-acetyl-alpha-D-muramoyl-L-alanyl-gamma-D-glutamyl-meso-2,6-diaminopimeloyl-D-alanyl-D-alanine + di-trans,octa-cis-undecaprenyl phosphate = di-trans,octa-cis-undecaprenyl diphospho-N-acetyl-alpha-D-muramoyl-L-alanyl-D-glutamyl-meso-2,6-diaminopimeloyl-D-alanyl-D-alanine + UMP. It functions in the pathway cell wall biogenesis; peptidoglycan biosynthesis. Catalyzes the initial step of the lipid cycle reactions in the biosynthesis of the cell wall peptidoglycan: transfers peptidoglycan precursor phospho-MurNAc-pentapeptide from UDP-MurNAc-pentapeptide onto the lipid carrier undecaprenyl phosphate, yielding undecaprenyl-pyrophosphoryl-MurNAc-pentapeptide, known as lipid I. The protein is Phospho-N-acetylmuramoyl-pentapeptide-transferase of Psychrobacter cryohalolentis (strain ATCC BAA-1226 / DSM 17306 / VKM B-2378 / K5).